A 456-amino-acid chain; its full sequence is tRNA-2-methylthio-N(6)-dimethylallyladenosine synthase (456 aa).

One can recognise an MTTase N-terminal domain in the interval 9–126; it reads KKLYIKTHGC…LPEMMETKKS (118 aa). The [4Fe-4S] cluster site is built by cysteine 18, cysteine 55, cysteine 89, cysteine 163, cysteine 167, and cysteine 170. The 233-residue stretch at 149-381 folds into the Radical SAM core domain; it reads DADGVSAFVS…QDRITQQAMA (233 aa). In terms of domain architecture, TRAM spans 384–448; it reads RRMVGNTERI…PNSLRGSLIA (65 aa).

This sequence belongs to the methylthiotransferase family. MiaB subfamily. As to quaternary structure, monomer. Requires [4Fe-4S] cluster as cofactor.

Its subcellular location is the cytoplasm. It catalyses the reaction N(6)-dimethylallyladenosine(37) in tRNA + (sulfur carrier)-SH + AH2 + 2 S-adenosyl-L-methionine = 2-methylsulfanyl-N(6)-dimethylallyladenosine(37) in tRNA + (sulfur carrier)-H + 5'-deoxyadenosine + L-methionine + A + S-adenosyl-L-homocysteine + 2 H(+). Functionally, catalyzes the methylthiolation of N6-(dimethylallyl)adenosine (i(6)A), leading to the formation of 2-methylthio-N6-(dimethylallyl)adenosine (ms(2)i(6)A) at position 37 in tRNAs that read codons beginning with uridine. In Cellvibrio japonicus (strain Ueda107) (Pseudomonas fluorescens subsp. cellulosa), this protein is tRNA-2-methylthio-N(6)-dimethylallyladenosine synthase.